A 354-amino-acid chain; its full sequence is MNINKKRIAIVLFNLGGPDSLKSVKPFLFNLFYDKAIINLPNPLRYIIAKLISTTREKKSQKIYSLIGGKSPLLEETEKQKLALAENLKQATNEDFNIFINMRYASPKIEETIKQIKEYNPTEVILLPLYPQFSTTTTGSSVKNFLSNFNINIPVKVVCCYPVEENFIKAHTALIKEKIFDKNSRVLFSAHGLPQKIIDAGDPYSFQVEETVKAVVKELNIKDLDYKVTYQSRVGPVEWLKPNTEDEIEIAGKQNKNIIIVPIAFVSEHVETLVELDIEYKLIADKYKIKYNRTPTLSTNKIFIKSLTSILLKFINKKEDDFLVASSNGERICPDKFSKCLCFTSFPPMRESSK.

Fe cation is bound by residues histidine 191 and glutamate 271.

This sequence belongs to the ferrochelatase family.

The protein resides in the cytoplasm. The enzyme catalyses heme b + 2 H(+) = protoporphyrin IX + Fe(2+). It functions in the pathway porphyrin-containing compound metabolism; protoheme biosynthesis; protoheme from protoporphyrin-IX: step 1/1. In terms of biological role, catalyzes the ferrous insertion into protoporphyrin IX. In Rickettsia bellii (strain OSU 85-389), this protein is Ferrochelatase.